Reading from the N-terminus, the 197-residue chain is Sec-independent protein translocase protein TatB (197 aa).

The helical transmembrane segment at 1 to 21 (MFDIGFGELLLVMVLGLIVLG) threads the bilayer. The interval 93-197 (KRGYTETPSP…ASARQPSDSR (105 aa)) is disordered. 2 stretches are compositionally biased toward basic and acidic residues: residues 104 to 113 (KSDDPKKSGD) and 160 to 169 (NHNDGRHATS). Residues 180-197 (PEQSQPSAASARQPSDSR) are compositionally biased toward low complexity.

This sequence belongs to the TatB family. The Tat system comprises two distinct complexes: a TatABC complex, containing multiple copies of TatA, TatB and TatC subunits, and a separate TatA complex, containing only TatA subunits. Substrates initially bind to the TatABC complex, which probably triggers association of the separate TatA complex to form the active translocon.

It localises to the cell inner membrane. Functionally, part of the twin-arginine translocation (Tat) system that transports large folded proteins containing a characteristic twin-arginine motif in their signal peptide across membranes. Together with TatC, TatB is part of a receptor directly interacting with Tat signal peptides. TatB may form an oligomeric binding site that transiently accommodates folded Tat precursor proteins before their translocation. The protein is Sec-independent protein translocase protein TatB of Pectobacterium atrosepticum (strain SCRI 1043 / ATCC BAA-672) (Erwinia carotovora subsp. atroseptica).